A 393-amino-acid polypeptide reads, in one-letter code: Formate-dependent phosphoribosylglycinamide formyltransferase (393 aa).

Residues 22–23 and E82 each bind N(1)-(5-phospho-beta-D-ribosyl)glycinamide; that span reads EL. ATP is bound by residues R114, K155, 160–165, 195–198, and E203; these read SSGKGQ and ESFV. Residues 119–308 enclose the ATP-grasp domain; it reads RLAAEEVGLK…EFALHVRAIL (190 aa). Residues E267 and E279 each coordinate Mg(2+). Residues D286, K356, and 363 to 364 contribute to the N(1)-(5-phospho-beta-D-ribosyl)glycinamide site; that span reads RR.

This sequence belongs to the PurK/PurT family. As to quaternary structure, homodimer.

It carries out the reaction N(1)-(5-phospho-beta-D-ribosyl)glycinamide + formate + ATP = N(2)-formyl-N(1)-(5-phospho-beta-D-ribosyl)glycinamide + ADP + phosphate + H(+). It functions in the pathway purine metabolism; IMP biosynthesis via de novo pathway; N(2)-formyl-N(1)-(5-phospho-D-ribosyl)glycinamide from N(1)-(5-phospho-D-ribosyl)glycinamide (formate route): step 1/1. Functionally, involved in the de novo purine biosynthesis. Catalyzes the transfer of formate to 5-phospho-ribosyl-glycinamide (GAR), producing 5-phospho-ribosyl-N-formylglycinamide (FGAR). Formate is provided by PurU via hydrolysis of 10-formyl-tetrahydrofolate. The protein is Formate-dependent phosphoribosylglycinamide formyltransferase of Maridesulfovibrio salexigens (strain ATCC 14822 / DSM 2638 / NCIMB 8403 / VKM B-1763) (Desulfovibrio salexigens).